Here is an 89-residue protein sequence, read N- to C-terminus: Small ribosomal subunit protein uS15 (89 aa).

The tract at residues 1–23 (MSLGTEEKQNLINTHQVHPTDTG) is disordered. The span at 10-23 (NLINTHQVHPTDTG) shows a compositional bias: polar residues.

It belongs to the universal ribosomal protein uS15 family. As to quaternary structure, part of the 30S ribosomal subunit. Forms a bridge to the 50S subunit in the 70S ribosome, contacting the 23S rRNA.

In terms of biological role, one of the primary rRNA binding proteins, it binds directly to 16S rRNA where it helps nucleate assembly of the platform of the 30S subunit by binding and bridging several RNA helices of the 16S rRNA. Forms an intersubunit bridge (bridge B4) with the 23S rRNA of the 50S subunit in the ribosome. The chain is Small ribosomal subunit protein uS15 from Prochlorococcus marinus (strain NATL2A).